We begin with the raw amino-acid sequence, 319 residues long: ATP-dependent 6-phosphofructokinase (319 aa).

Residue G11 participates in ATP binding. 21–25 (RAVVR) is an ADP binding site. Residues 72–73 (RS) and 102–105 (GDGS) each bind ATP. D103 serves as a coordination point for Mg(2+). 125-127 (TID) lines the substrate pocket. Catalysis depends on D127, which acts as the Proton acceptor. R154 serves as a coordination point for ADP. Residues R162 and 169–171 (MGR) contribute to the substrate site. Residues 185-187 (GAE) and 213-215 (KMH) contribute to the ADP site. Substrate-binding positions include E222, R243, and 249 to 252 (HIQR).

Belongs to the phosphofructokinase type A (PFKA) family. ATP-dependent PFK group I subfamily. Prokaryotic clade 'B1' sub-subfamily. In terms of assembly, homotetramer. Mg(2+) serves as cofactor.

It is found in the cytoplasm. The catalysed reaction is beta-D-fructose 6-phosphate + ATP = beta-D-fructose 1,6-bisphosphate + ADP + H(+). It functions in the pathway carbohydrate degradation; glycolysis; D-glyceraldehyde 3-phosphate and glycerone phosphate from D-glucose: step 3/4. With respect to regulation, allosterically activated by ADP and other diphosphonucleosides, and allosterically inhibited by phosphoenolpyruvate. In terms of biological role, catalyzes the phosphorylation of D-fructose 6-phosphate to fructose 1,6-bisphosphate by ATP, the first committing step of glycolysis. This is ATP-dependent 6-phosphofructokinase from Clostridium tetani (strain Massachusetts / E88).